The following is a 372-amino-acid chain: Alanine dehydrogenase 2 (372 aa).

Residue His-95 is part of the active site. 169–199 contacts NAD(+); sequence KVTIIGGGQAGTNAAKIALGLGADVTILDVN.

The protein belongs to the AlaDH/PNT family.

It carries out the reaction L-alanine + NAD(+) + H2O = pyruvate + NH4(+) + NADH + H(+). It participates in amino-acid degradation; L-alanine degradation via dehydrogenase pathway; NH(3) and pyruvate from L-alanine: step 1/1. Functionally, may play a role in cell wall synthesis as L-alanine is an important constituent of the peptidoglycan layer. In Staphylococcus aureus (strain N315), this protein is Alanine dehydrogenase 2 (ald2).